The primary structure comprises 241 residues: Probable transcriptional regulatory protein RALTA_A0859 (241 aa).

Belongs to the TACO1 family.

The protein localises to the cytoplasm. In Cupriavidus taiwanensis (strain DSM 17343 / BCRC 17206 / CCUG 44338 / CIP 107171 / LMG 19424 / R1) (Ralstonia taiwanensis (strain LMG 19424)), this protein is Probable transcriptional regulatory protein RALTA_A0859.